The chain runs to 309 residues: Taste receptor type 2 member 31 (309 aa).

The Extracellular segment spans residues 1-2 (MI). Residues 3 to 23 (TFLPIIFSILVVVTFVIGNFA) form a helical membrane-spanning segment. The Cytoplasmic portion of the chain corresponds to 24–55 (NGFIALVNSTEWVKRQKISFADQILTALAVSR). A helical transmembrane segment spans residues 56–76 (VGLLWVLLLNWYATVLNPAFY). The Extracellular portion of the chain corresponds to 77 to 100 (SVEVRTTTYNVWAVTNHFSNWLAT). The chain crosses the membrane as a helical span at residues 101-121 (SLSIFYLLKIANFSNLIFLHL). The Cytoplasmic portion of the chain corresponds to 122–126 (KRRVK). The chain crosses the membrane as a helical span at residues 127–147 (NVILVMLLGPLLILACHLFMV). Residues 148–181 (NMNEIVRTKEYEENMTWKYILRNAIYHPGMTVTT) lie on the Extracellular side of the membrane. Residue asparagine 161 is glycosylated (N-linked (GlcNAc...) asparagine). Residues 182–202 (LQNLVPFTLTLISFLLLICSL) traverse the membrane as a helical segment. Residues 203–229 (CKHLKKMQLHGKGPQDPSTKVHIKALQ) are Cytoplasmic-facing. A helical transmembrane segment spans residues 230–250 (IVISFLLLCVIYFVSVIISIW). Over 251 to 259 (SFESLGNKP) the chain is Extracellular. A helical transmembrane segment spans residues 260-280 (VFMFCQAIRFSYPSAHPFIVI). Over 281-309 (WGNKKLKQTFLSVLWNVRYWVKGQKPSSL) the chain is Cytoplasmic.

Belongs to the G-protein coupled receptor T2R family.

Its subcellular location is the membrane. In terms of biological role, receptor that may play a role in the perception of bitterness and is gustducin-linked. May play a role in sensing the chemical composition of the gastrointestinal content. The activity of this receptor may stimulate alpha gustducin, mediate PLC-beta-2 activation and lead to the gating of TRPM5. The chain is Taste receptor type 2 member 31 (TAS2R31) from Papio hamadryas (Hamadryas baboon).